Here is a 396-residue protein sequence, read N- to C-terminus: L-lactate dehydrogenase (396 aa).

In terms of domain architecture, FMN hydroxy acid dehydrogenase spans Met1–Gly380. Residue Tyr24 coordinates substrate. 2 residues coordinate FMN: Ser106 and Gln127. Tyr129 is a binding site for substrate. Thr155 provides a ligand contact to FMN. Arg164 contacts substrate. Residue Lys251 coordinates FMN. His275 functions as the Proton acceptor in the catalytic mechanism. Arg278 is a binding site for substrate. Asp306–Arg330 is an FMN binding site.

The protein belongs to the FMN-dependent alpha-hydroxy acid dehydrogenase family. Requires FMN as cofactor.

The protein resides in the cell inner membrane. The catalysed reaction is (S)-lactate + A = pyruvate + AH2. Catalyzes the conversion of L-lactate to pyruvate. Is coupled to the respiratory chain. In Escherichia coli O127:H6 (strain E2348/69 / EPEC), this protein is L-lactate dehydrogenase.